The chain runs to 364 residues: Ribosomal RNA large subunit methyltransferase M (364 aa).

Residues S198, 231 to 234, D250, D270, and D286 each bind S-adenosyl-L-methionine; that span reads APGG. K315 (proton acceptor) is an active-site residue.

The protein belongs to the class I-like SAM-binding methyltransferase superfamily. RNA methyltransferase RlmE family. RlmM subfamily. In terms of assembly, monomer.

The protein localises to the cytoplasm. The enzyme catalyses cytidine(2498) in 23S rRNA + S-adenosyl-L-methionine = 2'-O-methylcytidine(2498) in 23S rRNA + S-adenosyl-L-homocysteine + H(+). Its function is as follows. Catalyzes the 2'-O-methylation at nucleotide C2498 in 23S rRNA. This is Ribosomal RNA large subunit methyltransferase M from Thauera aminoaromatica.